The chain runs to 103 residues: Large ribosomal subunit protein bL21 (103 aa).

The protein belongs to the bacterial ribosomal protein bL21 family. Part of the 50S ribosomal subunit. Contacts protein L20.

Its function is as follows. This protein binds to 23S rRNA in the presence of protein L20. The sequence is that of Large ribosomal subunit protein bL21 from Leptothrix cholodnii (strain ATCC 51168 / LMG 8142 / SP-6) (Leptothrix discophora (strain SP-6)).